The following is a 197-amino-acid chain: uncharacterized protein (197 aa).

The first 23 residues, M1–A23, serve as a signal peptide directing secretion. N19 and N26 each carry an N-linked (GlcNAc...) asparagine glycan. The Extracellular portion of the chain corresponds to S24–T61. A helical transmembrane segment spans residues L62–F82. Residues H83–S197 lie on the Cytoplasmic side of the membrane. Positions M94–V179 are disordered. 2 stretches are compositionally biased toward basic and acidic residues: residues R96–S107 and H125–R136. Low complexity predominate over residues S147–P161. Residues C162–S171 show a composition bias toward pro residues.

Its subcellular location is the membrane. This is an uncharacterized protein from Pongo abelii (Sumatran orangutan).